A 121-amino-acid polypeptide reads, in one-letter code: Neuropeptide-like protein 7 (121 aa).

The first 22 residues, 1–22 (MYIKAALLIVVLFGVASQITSA), serve as a signal peptide directing secretion.

Functionally, may regulate lifespan in response to food availability and oxidative stress. This is Neuropeptide-like protein 7 from Caenorhabditis elegans.